The chain runs to 168 residues: G/U mismatch-specific DNA glycosylase (168 aa).

This sequence belongs to the uracil-DNA glycosylase (UDG) superfamily. TDG/mug family. In terms of assembly, binds DNA as a monomer.

The protein resides in the cytoplasm. The catalysed reaction is Specifically hydrolyzes mismatched double-stranded DNA and polynucleotides, releasing free uracil.. In terms of biological role, excises ethenocytosine and uracil, which can arise by alkylation or deamination of cytosine, respectively, from the corresponding mispairs with guanine in ds-DNA. It is capable of hydrolyzing the carbon-nitrogen bond between the sugar-phosphate backbone of the DNA and the mispaired base. The complementary strand guanine functions in substrate recognition. Required for DNA damage lesion repair in stationary-phase cells. The protein is G/U mismatch-specific DNA glycosylase of Salmonella gallinarum (strain 287/91 / NCTC 13346).